Consider the following 511-residue polypeptide: Maturase K (511 aa).

Belongs to the intron maturase 2 family. MatK subfamily.

Its subcellular location is the plastid. It is found in the chloroplast. In terms of biological role, usually encoded in the trnK tRNA gene intron. Probably assists in splicing its own and other chloroplast group II introns. The chain is Maturase K from Hordeum jubatum (Foxtail barley).